We begin with the raw amino-acid sequence, 754 residues long: 1,4-alpha-glucan branching enzyme GlgB (754 aa).

Catalysis depends on aspartate 431, which acts as the Nucleophile. Glutamate 484 acts as the Proton donor in catalysis.

It belongs to the glycosyl hydrolase 13 family. GlgB subfamily. As to quaternary structure, monomer.

The enzyme catalyses Transfers a segment of a (1-&gt;4)-alpha-D-glucan chain to a primary hydroxy group in a similar glucan chain.. The protein operates within glycan biosynthesis; glycogen biosynthesis. Functionally, catalyzes the formation of the alpha-1,6-glucosidic linkages in glycogen by scission of a 1,4-alpha-linked oligosaccharide from growing alpha-1,4-glucan chains and the subsequent attachment of the oligosaccharide to the alpha-1,6 position. The polypeptide is 1,4-alpha-glucan branching enzyme GlgB (Prochlorococcus marinus (strain MIT 9215)).